The chain runs to 160 residues: Small ribosomal subunit protein uS9 (160 aa).

It belongs to the universal ribosomal protein uS9 family.

The protein is Small ribosomal subunit protein uS9 of Bradyrhizobium sp. (strain ORS 278).